The chain runs to 146 residues: Hemoglobin subunit beta (146 aa).

Val1 bears the N-acetylvaline; partial mark. Residues 2–146 (HLTDAEKAAV…VANALAHKYH (145 aa)) form the Globin domain. Residue Thr12 is modified to Phosphothreonine. At Lys59 the chain carries N6-acetyllysine. Heme b is bound at residue His63. Lys82 is subject to N6-acetyllysine. His92 contacts heme b. Cys93 is modified (S-nitrosocysteine). Lys144 bears the N6-acetyllysine mark.

This sequence belongs to the globin family. Heterotetramer of two alpha chains and two beta chains. In terms of tissue distribution, red blood cells.

Its function is as follows. Involved in oxygen transport from the lung to the various peripheral tissues. The sequence is that of Hemoglobin subunit beta (HBB) from Procavia capensis habessinica (Abyssinian hyrax).